The sequence spans 423 residues: Gamma-glutamyl phosphate reductase (423 aa).

Belongs to the gamma-glutamyl phosphate reductase family.

It is found in the cytoplasm. It catalyses the reaction L-glutamate 5-semialdehyde + phosphate + NADP(+) = L-glutamyl 5-phosphate + NADPH + H(+). The protein operates within amino-acid biosynthesis; L-proline biosynthesis; L-glutamate 5-semialdehyde from L-glutamate: step 2/2. Functionally, catalyzes the NADPH-dependent reduction of L-glutamate 5-phosphate into L-glutamate 5-semialdehyde and phosphate. The product spontaneously undergoes cyclization to form 1-pyrroline-5-carboxylate. The chain is Gamma-glutamyl phosphate reductase from Paracoccus denitrificans (strain Pd 1222).